A 474-amino-acid chain; its full sequence is E3 ubiquitin-protein ligase RNF14 (474 aa).

In terms of domain architecture, RWD spans 11–137 (DELLALASIY…QFLKEETLAY (127 aa)). The D-box signature appears at 37–45 (RIYLDLPQN). Positions 216 to 457 (KLFLCSICFC…DPGSPCFNRL (242 aa)) are TRIAD supradomain. Zn(2+) is bound by residues C220, C223, C238, H240, C243, C246, C265, C270, C309, C314, C329, C332, C337, C340, and H345. The segment at 220 to 270 (CSICFCEKLGSECMYFLECRHVYCKACLKDYFEIQIRDGQVQCLNCPEPKC) adopts an RING-type 1 zinc-finger fold. The IBR-type zinc finger occupies 289-350 (ARYDRLLLQS…RLTYHGVSPC (62 aa)). Phosphoserine is present on S348. C350 is a Zn(2+) binding site. Residues 351-395 (KVTAEKLMDLRNEYLQADEANKRLLDQRYGKRVIQKALEEMESKE) are a coiled coil. Residues 361–474 (RNEYLQADEA…DDIWEDEVED (114 aa)) are interaction with androgen receptor. Zn(2+) is bound by residues C404 and C407. Residues 404–433 (CPCCGTPIEKLDGCNKMTCTGCMQYFCWIC) form an RING-type 2; atypical zinc finger. C417 is a catalytic residue. Residues C422, C425, C430, C433, H445, and C453 each coordinate Zn(2+).

The protein belongs to the RBR family. RNF14 subfamily. In terms of assembly, interacts with GCN1; interaction takes place in response to ribosome collisions and is required for ubiquitination of EEF1A1/eEF1A. Interacts with the ubiquitin-conjugating enzymes UBE2E1 and UBE2E2. Interacts with AR/androgen receptor. Interacts with TCF7/TCF1, TCF7L1/TCF3 and TCF7L2/TCF4; promoting Wnt signaling. In terms of processing, RING-type zinc finger-dependent and UBE2E2-dependent autoubiquitination. In terms of tissue distribution, widely expressed.

The protein resides in the cytoplasm. It localises to the nucleus. It carries out the reaction [E2 ubiquitin-conjugating enzyme]-S-ubiquitinyl-L-cysteine + [acceptor protein]-L-lysine = [E2 ubiquitin-conjugating enzyme]-L-cysteine + [acceptor protein]-N(6)-ubiquitinyl-L-lysine.. It participates in protein modification; protein ubiquitination. Its function is as follows. E3 ubiquitin-protein ligase that plays a key role in the RNF14-RNF25 translation quality control pathway, a pathway that takes place when a ribosome has stalled during translation, and which promotes ubiquitination and degradation of translation factors on stalled ribosomes. Recruited to stalled ribosomes by the ribosome collision sensor GCN1 and mediates 'Lys-6'-linked ubiquitination of target proteins, leading to their degradation. Mediates ubiquitination of EEF1A1/eEF1A and ETF1/eRF1 translation factors on stalled ribosomes, leading to their degradation. Also catalyzes ubiquitination of ribosomal proteins RPL0, RPL1, RPL12, RPS13 and RPS17. Specifically required to resolve RNA-protein cross-links caused by reactive aldehydes, which trigger translation stress by stalling ribosomes: acts by catalying 'Lys-6'-linked ubiquitination of RNA-protein cross-links, leading to their removal by the ATP-dependent unfoldase VCP and subsequent degradation by the proteasome. Independently of its function in the response to stalled ribosomes, acts as a regulator of transcription in Wnt signaling via its interaction with TCF transcription factors (TCF7/TCF1, TCF7L1/TCF3 and TCF7L2/TCF4). May also play a role as a coactivator for androgen- and, to a lesser extent, progesterone-dependent transcription. This chain is E3 ubiquitin-protein ligase RNF14, found in Homo sapiens (Human).